Consider the following 544-residue polypeptide: Membrane protein insertase YidC (544 aa).

Helical transmembrane passes span 6-26, 343-363, 418-438, 456-476, and 497-517; these read NLLL…WETD, KFLH…TFIV, LGGC…YYML, LSAQ…MFFI, and PVIF…YYIV.

Belongs to the OXA1/ALB3/YidC family. Type 1 subfamily. Interacts with the Sec translocase complex via SecD. Specifically interacts with transmembrane segments of nascent integral membrane proteins during membrane integration.

It localises to the cell inner membrane. Functionally, required for the insertion and/or proper folding and/or complex formation of integral membrane proteins into the membrane. Involved in integration of membrane proteins that insert both dependently and independently of the Sec translocase complex, as well as at least some lipoproteins. Aids folding of multispanning membrane proteins. The chain is Membrane protein insertase YidC from Pectobacterium atrosepticum (strain SCRI 1043 / ATCC BAA-672) (Erwinia carotovora subsp. atroseptica).